The following is a 267-amino-acid chain: Diaminopimelate epimerase (267 aa).

The substrate site is built by N15 and N66. C75 serves as the catalytic Proton donor. Substrate is bound by residues 76–77 (GN), N150, N183, and 201–202 (ER). C210 acts as the Proton acceptor in catalysis. 211–212 (GT) serves as a coordination point for substrate.

This sequence belongs to the diaminopimelate epimerase family. Homodimer.

It is found in the cytoplasm. It catalyses the reaction (2S,6S)-2,6-diaminopimelate = meso-2,6-diaminopimelate. It participates in amino-acid biosynthesis; L-lysine biosynthesis via DAP pathway; DL-2,6-diaminopimelate from LL-2,6-diaminopimelate: step 1/1. Catalyzes the stereoinversion of LL-2,6-diaminopimelate (L,L-DAP) to meso-diaminopimelate (meso-DAP), a precursor of L-lysine and an essential component of the bacterial peptidoglycan. The polypeptide is Diaminopimelate epimerase (Bacteroides thetaiotaomicron (strain ATCC 29148 / DSM 2079 / JCM 5827 / CCUG 10774 / NCTC 10582 / VPI-5482 / E50)).